The sequence spans 267 residues: Glutamate racemase (267 aa).

Residues 10-11 and 42-43 each bind substrate; these read DS and YG. Catalysis depends on Cys-73, which acts as the Proton donor/acceptor. 74–75 lines the substrate pocket; it reads NT. Residue Cys-183 is the Proton donor/acceptor of the active site. 184 to 185 provides a ligand contact to substrate; that stretch reads TH.

It belongs to the aspartate/glutamate racemases family.

The catalysed reaction is L-glutamate = D-glutamate. Its pathway is cell wall biogenesis; peptidoglycan biosynthesis. Provides the (R)-glutamate required for cell wall biosynthesis. This is Glutamate racemase from Limosilactobacillus reuteri (strain DSM 20016) (Lactobacillus reuteri).